The following is a 120-amino-acid chain: Large ribosomal subunit protein bL19 (120 aa).

Belongs to the bacterial ribosomal protein bL19 family.

Functionally, this protein is located at the 30S-50S ribosomal subunit interface and may play a role in the structure and function of the aminoacyl-tRNA binding site. The sequence is that of Large ribosomal subunit protein bL19 from Chlorobium phaeobacteroides (strain DSM 266 / SMG 266 / 2430).